Here is a 437-residue protein sequence, read N- to C-terminus: Regulator of phospholipase D SRF1 (437 aa).

A disordered region spans residues 1–24; that stretch reads MGDSNSSQEAYSDTTSTNASRIAD. Residues 1–267 lie on the Cytoplasmic side of the membrane; the sequence is MGDSNSSQEA…LTSLLLDNQY (267 aa). Phosphoserine is present on residues Ser45 and Ser167. Residues 268–288 form a helical membrane-spanning segment; it reads LILGLRIFTGILSCISLALAI. Over 289-308 the chain is Extracellular; it reads KIFQNSRSNNTISESKIGQQ. Residue Asn297 is glycosylated (N-linked (GlcNAc...) asparagine). Residues 309–329 form a helical membrane-spanning segment; it reads PSTIMAICVNAVAIAYIIYIA. At 330–348 the chain is on the cytoplasmic side; that stretch reads HDEFAGKPVGLRNPLSKLK. The helical transmembrane segment at 349–369 threads the bilayer; sequence LILLDLLFIIFSSANLALAFN. The Extracellular portion of the chain corresponds to 370–403; that stretch reads TRFDKEWVCTSIRRSNGSTYGYPKIPRICRKQEA. N-linked (GlcNAc...) asparagine glycosylation is present at Asn385. A helical membrane pass occupies residues 404-424; it reads LSAFLFVALFMWVITFSISIV. Topologically, residues 425–437 are cytoplasmic; it reads RVVEKVSSITNRN.

In terms of assembly, interacts with SPO14.

It is found in the membrane. Regulator of phospholipase D (SPO14) which is required for SPO14 catalytic activity in mitotic cells. Essential to buffer the toxic effects of C16:0 platelet activating factor. The chain is Regulator of phospholipase D SRF1 (SRF1) from Saccharomyces cerevisiae (strain ATCC 204508 / S288c) (Baker's yeast).